The chain runs to 273 residues: Multidrug-efflux transporter 2 regulator (273 aa).

Residues 8–77 (YFTTGEFSKL…LKEIKCLIKG (70 aa)) enclose the HTH merR-type domain. Positions 11-30 (TGEFSKLCRVKKQTLFHYDE) form a DNA-binding region, H-T-H motif.

Functionally, activates transcription of the blt gene in response to structurally dissimilar drugs. The protein is Multidrug-efflux transporter 2 regulator (bltR) of Bacillus subtilis (strain 168).